The chain runs to 40 residues: RNA replication protein (40 aa).

The protein belongs to the potexviruses/carlaviruses RNA replication protein family.

It carries out the reaction RNA(n) + a ribonucleoside 5'-triphosphate = RNA(n+1) + diphosphate. The catalysed reaction is ATP + H2O = ADP + phosphate + H(+). Functionally, RNA replication. The central part of this protein possibly functions as an ATP-binding helicase. This chain is RNA replication protein, found in Lily symptomless virus (LSV).